The following is a 1370-amino-acid chain: DNA-directed RNA polymerase subunit beta (1370 aa).

The protein belongs to the RNA polymerase beta chain family. In terms of assembly, the RNAP catalytic core consists of 2 alpha, 1 beta, 1 beta' and 1 omega subunit. When a sigma factor is associated with the core the holoenzyme is formed, which can initiate transcription.

It carries out the reaction RNA(n) + a ribonucleoside 5'-triphosphate = RNA(n+1) + diphosphate. DNA-dependent RNA polymerase catalyzes the transcription of DNA into RNA using the four ribonucleoside triphosphates as substrates. The protein is DNA-directed RNA polymerase subunit beta of Bordetella parapertussis (strain 12822 / ATCC BAA-587 / NCTC 13253).